Consider the following 359-residue polypeptide: APRTVLLLLSAALALTETWAGSHSMRYFYTSVSRPGRGEPRFITVGYVDDTQFVRFDSDAASPRMEPRAPWIEQEGPEYWDRETRNMKASAQTDRENLRIALRYYNQSEAGSHTWQTMYGCDMGPDGRLLRGYGQYAYDGKDYIALNEDLSSWTAADTAAQITQRKWEAAREAEQRRAYLEGTCVEWLRRYLENGKETLQRADPPKTHVTHHPISDHEATLRCWALGFYPAEITLTWQRDGEDQTQDTELVETRPEGDRTFQKWAAVVVPSGEEQRYTCHVQHEGLPKPLTLRWEPSSQSTIPIVGIVAGLAVLVVTVAVVAVVAAVMCRRKSSGGKGGSYSQAASSDSAQGSDVSLTA.

The first 20 residues, 1 to 20, serve as a signal peptide directing secretion; sequence APRTVLLLLSAALALTETWA. The interval 21-110 is alpha-1; that stretch reads GSHSMRYFYT…ALRYYNQSEA (90 aa). The Extracellular portion of the chain corresponds to 21 to 305; sequence GSHSMRYFYT…PSSQSTIPIV (285 aa). A glycan (N-linked (GlcNAc...) asparagine) is linked at Asn106. The segment at 111–202 is alpha-2; the sequence is GSHTWQTMYG…ENGKETLQRA (92 aa). 2 disulfide bridges follow: Cys121–Cys184 and Cys223–Cys279. The tract at residues 203–294 is alpha-3; that stretch reads DPPKTHVTHH…GLPKPLTLRW (92 aa). An Ig-like C1-type domain is found at 205–291; it reads PKTHVTHHPI…QHEGLPKPLT (87 aa). Residues 295–305 are connecting peptide; the sequence is EPSSQSTIPIV. Residues 306–329 form a helical membrane-spanning segment; it reads GIVAGLAVLVVTVAVVAVVAAVMC. Topologically, residues 330-359 are cytoplasmic; that stretch reads RRKSSGGKGGSYSQAASSDSAQGSDVSLTA. The interval 332–359 is disordered; sequence KSSGGKGGSYSQAASSDSAQGSDVSLTA. A compositionally biased stretch (low complexity) spans 340–359; the sequence is SYSQAASSDSAQGSDVSLTA. Ser353 and Ser356 each carry phosphoserine.

Belongs to the MHC class I family. In terms of assembly, heterodimer of an alpha chain and a beta chain (beta-2-microglobulin).

It is found in the membrane. Functionally, involved in the presentation of foreign antigens to the immune system. This is Patr class I histocompatibility antigen, B-1 alpha chain from Pan troglodytes (Chimpanzee).